The chain runs to 538 residues: Lipid scramblase CLPTM1L (538 aa).

Over 1–9 (MFPKTSFTS) the chain is Cytoplasmic. The chain crosses the membrane as a helical span at residues 10-30 (LIVGVFLLYVLHTCWVMYGIV). The Extracellular portion of the chain corresponds to 31-284 (YTKPCEKRRA…IKGIFVDTNL (254 aa)). N-linked (GlcNAc...) asparagine glycans are attached at residues Asn90 and Asn100. Residues 140 to 166 (ISLITGQDEPEKPDQQKQSSDSELDRP) are disordered. Asn229 carries N-linked (GlcNAc...) asparagine glycosylation. The chain crosses the membrane as a helical span at residues 285–305 (YFLALTFFVAAFHLLFDFLAF). Residues 306-324 (KNDISFWKHKKSMVGMSSK) lie on the Cytoplasmic side of the membrane. Residues 325-341 (AVLWRCFSTIVIFLYLL) traverse the membrane as a helical segment. Over 342–402 (DEQTSLLVLV…TEEYDTLAMK (61 aa)) the chain is Extracellular. A helical transmembrane segment spans residues 403-423 (YLSYLLYPLCVGGAVYALVFV). The Cytoplasmic portion of the chain corresponds to 424–428 (KYKSW). Residues 429–449 (YSWIINSLVNGVYAFGFLFML) form a helical membrane-spanning segment. Over 450 to 538 (PQLFVNYKLK…EKPKGKSHED (89 aa)) the chain is Extracellular.

The protein belongs to the CLPTM1 family.

Its subcellular location is the endoplasmic reticulum membrane. It catalyses the reaction a 6-(alpha-D-glucosaminyl)-1-(1,2-diacyl-sn-glycero-3-phospho)-1D-myo-inositol(in) = a 6-(alpha-D-glucosaminyl)-1-(1,2-diacyl-sn-glycero-3-phospho)-1D-myo-inositol(out). The catalysed reaction is 6-(alpha-D-glucosaminyl)-(1-octadecanoyl,2-(9Z)-octadecenoyl-sn-glycero-3-phospho)-1D-myo-inositol(in) = 6-(alpha-D-glucosaminyl)-(1-octadecanoyl,2-(9Z)-octadecenoyl-sn-glycero-3-phospho)-1D-myo-inositol(out). It carries out the reaction a 1,2-diacyl-sn-glycero-3-phospho-(1D-myo-inositol)(in) = a 1,2-diacyl-sn-glycero-3-phospho-(1D-myo-inositol)(out). The enzyme catalyses a 1,2-diacyl-sn-glycero-3-phosphocholine(in) = a 1,2-diacyl-sn-glycero-3-phosphocholine(out). It catalyses the reaction a 1,2-diacyl-sn-glycero-3-phosphoethanolamine(in) = a 1,2-diacyl-sn-glycero-3-phosphoethanolamine(out). Scramblase that mediates the translocation of glucosaminylphosphatidylinositol (alpha-D-GlcN-(1-6)-(1,2-diacyl-sn-glycero-3-phospho)-1D-myo-inositol, GlcN-PI) across the endoplasmic reticulum (ER) membrane, from the cytosolic leaflet to the luminal leaflet of the ER membrane, where it participates in the biosynthesis of glycosylphosphatidylinositol (GPI). GPI is a lipid glycoconjugate involved in post-translational modification of proteins. Can also translocate 1,2-diacyl-sn-glycero-3-phospho-(1D-myo-inositol) (phosphatidylinositol or PI), as well as several other phospholipids (1,2-diacyl-sn-glycero-3-phosphocholine, 1,2-diacyl-sn-glycero-3-phosphoethanolamine), and N-acetylglucosaminylphosphatidylinositol (GlcNAc-PI) in vitro. In Danio rerio (Zebrafish), this protein is Lipid scramblase CLPTM1L (clptm1l).